Consider the following 351-residue polypeptide: Alcohol dehydrogenase 5 (351 aa).

Cys-47, His-70, Cys-101, Cys-104, Cys-107, Cys-115, and Cys-183 together coordinate Zn(2+). NAD(+) is bound by residues 181–187 (GACGGLG), Asp-205, Lys-210, 272–274 (VGM), and Arg-344.

It belongs to the zinc-containing alcohol dehydrogenase family. Requires Zn(2+) as cofactor.

It carries out the reaction a primary alcohol + NAD(+) = an aldehyde + NADH + H(+). The catalysed reaction is a secondary alcohol + NAD(+) = a ketone + NADH + H(+). This chain is Alcohol dehydrogenase 5 (ADH5), found in Saccharomyces pastorianus (Lager yeast).